The sequence spans 525 residues: GMP synthase [glutamine-hydrolyzing] (525 aa).

One can recognise a Glutamine amidotransferase type-1 domain in the interval 9–207 (RILILDFGSQ…VRDICQCEAL (199 aa)). Catalysis depends on Cys-86, which acts as the Nucleophile. Residues His-181 and Glu-183 contribute to the active site. The 193-residue stretch at 208-400 (WTPAKIIDDA…LGLPYDMLYR (193 aa)) folds into the GMPS ATP-PPase domain. 235–241 (SGGVDSS) provides a ligand contact to ATP.

As to quaternary structure, homodimer.

It carries out the reaction XMP + L-glutamine + ATP + H2O = GMP + L-glutamate + AMP + diphosphate + 2 H(+). It functions in the pathway purine metabolism; GMP biosynthesis; GMP from XMP (L-Gln route): step 1/1. Its function is as follows. Catalyzes the synthesis of GMP from XMP. In Escherichia coli O17:K52:H18 (strain UMN026 / ExPEC), this protein is GMP synthase [glutamine-hydrolyzing].